Reading from the N-terminus, the 41-residue chain is MDIDYRIAIVLAPVVIAASWAVFNIGAAALRQIQGFLDREA.

A helical transmembrane segment spans residues Ile7–Ile25.

The protein belongs to the PsbY family. In terms of assembly, PSII is composed of 1 copy each of membrane proteins PsbA, PsbB, PsbC, PsbD, PsbE, PsbF, PsbH, PsbI, PsbJ, PsbK, PsbL, PsbM, PsbT, PsbX, PsbY, PsbZ, Psb30/Ycf12, peripheral proteins PsbO, CyanoQ (PsbQ), PsbU, PsbV and a large number of cofactors. It forms dimeric complexes.

It localises to the cellular thylakoid membrane. Loosely associated component of the core of photosystem II (PSII), it is not always seen in crystals. PSII is a light-driven water plastoquinone oxidoreductase, using light energy to abstract electrons from H(2)O, generating a proton gradient subsequently used for ATP formation. The protein is Photosystem II reaction center protein Y of Nostoc punctiforme (strain ATCC 29133 / PCC 73102).